The primary structure comprises 359 residues: MDSLIKLFFCLFIFLCTSLLFGEINGVEGSNQNHHLYPFRPTKLFVFGDSYADTGNIKKAFSSSWKFPYGITFPGKPAGRFSDGRVATDFLAKFVGIKSPIPYFWKDYAGKKRLQYGMNFAYGGTGVFNTQTPLPNMTTQIDIFQNILTTGDIYYPPELTSSVALVSVAGNDYSNFIALNRPASEFPAFIKQVVDQTEVNLRRIHALGVKKIAVPSLQPLGCLPPFTFVTSFQRCNETQNALVNLHNNLLQQVVAKLNNETKQSTFIILDLYNAFLTVFKNKGSNPGSTRFESPLKPCCVGVSREYNCGSVDEKGVKKYIVCDNPKTAFFWDGLHPTEEGWRSVYSVLRESLTASLIKA.

A signal peptide spans 1–22 (MDSLIKLFFCLFIFLCTSLLFG). The active-site Nucleophile is serine 50. Asparagine 136, asparagine 236, and asparagine 259 each carry an N-linked (GlcNAc...) asparagine glycan. Residues aspartate 332 and histidine 335 contribute to the active site.

This sequence belongs to the 'GDSL' lipolytic enzyme family.

It localises to the secreted. The protein is GDSL esterase/lipase At5g03610 of Arabidopsis thaliana (Mouse-ear cress).